The primary structure comprises 98 residues: NADH-ubiquinone oxidoreductase chain 4L (98 aa).

A run of 3 helical transmembrane segments spans residues 1-21 (MSLV…GLLM), 29-49 (SLLC…IMIL), and 61-81 (IILL…LVMV).

It belongs to the complex I subunit 4L family. Core subunit of respiratory chain NADH dehydrogenase (Complex I) which is composed of 45 different subunits.

The protein localises to the mitochondrion inner membrane. The catalysed reaction is a ubiquinone + NADH + 5 H(+)(in) = a ubiquinol + NAD(+) + 4 H(+)(out). Its function is as follows. Core subunit of the mitochondrial membrane respiratory chain NADH dehydrogenase (Complex I) which catalyzes electron transfer from NADH through the respiratory chain, using ubiquinone as an electron acceptor. Part of the enzyme membrane arm which is embedded in the lipid bilayer and involved in proton translocation. The protein is NADH-ubiquinone oxidoreductase chain 4L (MT-ND4L) of Urotrichus talpoides (Japanese shrew mole).